We begin with the raw amino-acid sequence, 872 residues long: DNA mismatch repair protein MutS (872 aa).

Residue 622-629 coordinates ATP; the sequence is GPNMAGKS.

This sequence belongs to the DNA mismatch repair MutS family.

Its function is as follows. This protein is involved in the repair of mismatches in DNA. It is possible that it carries out the mismatch recognition step. This protein has a weak ATPase activity. The sequence is that of DNA mismatch repair protein MutS from Geotalea uraniireducens (strain Rf4) (Geobacter uraniireducens).